The following is a 170-amino-acid chain: Acetolactate synthase small subunit (170 aa).

An ACT domain is found at 9-83 (TLSVLVEDKP…NVIKIVEQEE (75 aa)). Residue K46 forms an Isoglutamyl lysine isopeptide (Lys-Gln) (interchain with Q-Cter in protein Pup) linkage.

Belongs to the acetolactate synthase small subunit family. As to quaternary structure, dimer of large and small chains.

The enzyme catalyses 2 pyruvate + H(+) = (2S)-2-acetolactate + CO2. It functions in the pathway amino-acid biosynthesis; L-isoleucine biosynthesis; L-isoleucine from 2-oxobutanoate: step 1/4. It participates in amino-acid biosynthesis; L-valine biosynthesis; L-valine from pyruvate: step 1/4. The protein is Acetolactate synthase small subunit (ilvH) of Mycolicibacterium smegmatis (strain ATCC 700084 / mc(2)155) (Mycobacterium smegmatis).